The following is a 520-amino-acid chain: Rho GTPase-activating protein gacV (520 aa).

A helical membrane pass occupies residues 8–28 (NIKTYYIIGIITLIFIVSAVI). The stretch at 28–192 (IKNQLSSSNQ…EEQEEEQFSM (165 aa)) forms a coiled coil. 4 disordered regions span residues 33–73 (SSSN…KLDN), 121–189 (EEKQ…EEEQ), 348–373 (NNNNNNNNNNNNNNNNNNDNNNNNNE), and 489–520 (LQEQNDQEEDNQEEEKDNQEEDEDEEDKDQEE). A compositionally biased stretch (basic residues) spans 52-62 (SKGRGNKKGKK). The span at 63–73 (PEKIQEKKLDN) shows a compositional bias: basic and acidic residues. Over residues 140–189 (QEEEEEEEEQQEIEEDEEEEEGQEQEEEEEQQEIEEGEEEQQEEEQEEEQ) the composition is skewed to acidic residues. In terms of domain architecture, Rho-GAP spans 195 to 472 (VSIERLMDFQ…ILLKQKKEIA (278 aa)). Low complexity predominate over residues 348-372 (NNNNNNNNNNNNNNNNNNDNNNNNN). Positions 480–520 (YFKDEYSKKLQEQNDQEEDNQEEEKDNQEEDEDEEDKDQEE) form a coiled coil. Positions 493-520 (NDQEEDNQEEEKDNQEEDEDEEDKDQEE) are enriched in acidic residues.

It localises to the membrane. Its function is as follows. Rho GTPase-activating protein involved in the signal transduction pathway. The protein is Rho GTPase-activating protein gacV (gacV) of Dictyostelium discoideum (Social amoeba).